Here is a 40-residue protein sequence, read N- to C-terminus: Competence and sporulation stimulating factor (40 aa).

A propeptide spanning residues 1 to 35 (MKLKSKLFVICLAAAAIFTAAGVSANAEALDFHVT) is cleaved from the precursor.

Belongs to the Phr family. In terms of assembly, interacts with RapC and inhibits its interaction with ComA. In terms of processing, secreted with a propeptide domain, which is cleaved in the cell wall by the secreted serine proteases subtilisin, Epr and Vpr to produce a mature signaling peptide. Contains a predicted signal peptide cleavage site in the N-terminal region, however the propeptide is probably subject to only one processing event, at the N-terminal end of the mature peptide.

The protein resides in the secreted. Its subcellular location is the cytoplasm. It localises to the host cell. In terms of biological role, signaling molecule that serves as a cell density signal for both genetic competence development and sporulation. Secreted during production, but the mature peptide acts intracellularly, indicating that it needs to be imported into the cell to function. At low concentrations, CSF stimulates expression of the genes controlled by ComA, a transcriptional factor that regulates the development of genetic competence. It includes the srfA operon, which encodes a small protein, ComS, required for competence development, and the surfactin biosynthetic enzymes. Acts by inhibiting RapC, which regulates the activity of ComA. At high concentrations, it inhibits expression of those same ComA-controlled genes, maybe by inhibiting activity of the kinase ComP. In addition, high concentrations of CSF can stimulate sporulation under some conditions. Also inhibits RapB activity, with lower efficiency, but does not act on RapA. Is probably involved in the quorum sensing control of sporulation. CSF is a species-specific signaling molecule that partially compensates for the lack of ComX-mediated communication between different strains of B.subtilis. Functionally, b.subtilis is a well-characterized soil and water saprophyte, but it is also found in enteric flora of many species, including humans. In this environment, CSF can be transported into human intestinal epithelia via OCTN2, a host cell membrane transporter, and can induce cytoprotective heat shock proteins contributing to intestinal homeostasis. Its function is as follows. In addition, in non-domesticated swarming strains of B.subtilis, the residual propeptide exposed on the exterior of the cytoplasmic membrane may have an extracellular role in swarming. This function is probably not dependent on CSF. This is Competence and sporulation stimulating factor from Bacillus subtilis (strain 168).